A 379-amino-acid chain; its full sequence is GDSL esterase/lipase At3g05180 (379 aa).

The first 27 residues, 1–27, serve as a signal peptide directing secretion; that stretch reads METLFHTLLRLLLFVAISHTLSPLAGS. Catalysis depends on S43, which acts as the Nucleophile. N294 and N330 each carry an N-linked (GlcNAc...) asparagine glycan. Catalysis depends on residues D349 and H352.

It belongs to the 'GDSL' lipolytic enzyme family.

Its subcellular location is the secreted. This chain is GDSL esterase/lipase At3g05180, found in Arabidopsis thaliana (Mouse-ear cress).